Consider the following 84-residue polypeptide: Small ribosomal subunit protein uS17 (84 aa).

It belongs to the universal ribosomal protein uS17 family. Part of the 30S ribosomal subunit.

Its function is as follows. One of the primary rRNA binding proteins, it binds specifically to the 5'-end of 16S ribosomal RNA. This chain is Small ribosomal subunit protein uS17, found in Citrobacter koseri (strain ATCC BAA-895 / CDC 4225-83 / SGSC4696).